The chain runs to 431 residues: REST corepressor 1 (431 aa).

The segment covering 1-10 has biased composition (basic and acidic residues); the sequence is MIEKGAEISG. The disordered stretch occupies residues 1–53; the sequence is MIEKGAEISGKRRGRNNAANSKSLGTNVNGSNSWEEGSSSSSSDDEPGGGGMR. Over residues 17-28 the composition is skewed to polar residues; it reads NAANSKSLGTNV. Over residues 29–42 the composition is skewed to low complexity; it reads NGSNSWEEGSSSSS. One can recognise an ELM2 domain in the interval 50-135; sequence GGMRVGLQYQ…KSLADLLNFT (86 aa). The region spanning 136–187 is the SANT 1 domain; that stretch reads PFPDEWTVEDRVLFEQAFSFHGKTFHRIQQMLPDKSIASLVKFYYSWKKTRS. Positions 190 to 262 are disordered; that stretch reads SVMDRHARKQ…NRAKRKPPNG (73 aa). Residues 224 to 242 are compositionally biased toward basic and acidic residues; the sequence is EQPKEAKKEVPKNDTVPHI. A coiled-coil region spans residues 267–314; the sequence is QEDVEAVSANANAATTVLRQLDMELVSIKRQIQNIKQTNSAFKEKLQG. The SANT 2 domain occupies 327 to 378; the sequence is KFNARWTTEEQLLAVQAIRMYGRDFQAISDVIGNKSVVQVKNFFVNYRRRFN.

This sequence belongs to the CoREST family. As to quaternary structure, component of a BHC histone deacetylase complex that contains KDM1A. In terms of tissue distribution, expressed in territories in which neurogenesis takes place.

Its subcellular location is the nucleus. In terms of biological role, essential component of the BHC complex, a corepressor complex that represses transcription of neuron-specific genes in non-neuronal cells. The BHC complex is recruited at RE1/NRSE sites by REST and acts by deacetylating and demethylating specific sites on histones, thereby acting as a chromatin modifier. In the BHC complex, it serves as a molecular beacon for the recruitment of molecular machinery that imposes silencing across a chromosomal interval. Plays a central role in demethylation of Lys-4 of histone H3 by promoting demethylase activity of KDM1A on core histones and nucleosomal substrates. This Xenopus laevis (African clawed frog) protein is REST corepressor 1 (rcor1).